A 219-amino-acid chain; its full sequence is UPF0502 protein Swoo_2055 (219 aa).

The disordered stretch occupies residues 167–195 (QVKGESVPISEHSRSQREAPSKRQDEMDE). Residues 177–191 (EHSRSQREAPSKRQD) are compositionally biased toward basic and acidic residues.

It belongs to the UPF0502 family.

In Shewanella woodyi (strain ATCC 51908 / MS32), this protein is UPF0502 protein Swoo_2055.